The primary structure comprises 253 residues: Chloride intracellular channel protein 4 (253 aa).

Residue Ala-2 is modified to N-acetylalanine. Residues 2–101 (ALSMPLNGLK…EEFLEEVLCP (100 aa)) form a required for insertion into the membrane region. The residue at position 4 (Ser-4) is a Phosphoserine. An N6-acetyllysine modification is found at Lys-24. Residues 35 to 38 (CPFS) carry the G-site motif. A helical transmembrane segment spans residues 37–57 (FSQRLFMILWLKGVVFSVTTV). The 164-residue stretch at 81-244 (NSEVKTDVNK…PSDKEVEIAY (164 aa)) folds into the GST C-terminal domain. At Lys-130 the chain carries N6-acetyllysine. 3 positions are modified to phosphoserine: Ser-132, Ser-167, and Ser-236. The residue at position 244 (Tyr-244) is a Phosphotyrosine.

This sequence belongs to the chloride channel CLIC family. Monomer. Interacts with HRH3. As to expression, detected in brain, in cell bodies and dendrites of Purkinje cells in cerebellar neurons (at protein level). Expressed neonatal and adult cardiomyocytes (at protein level). Marked expression was found in hippocampus and cerebellum, and in many other tissues.

It is found in the cytoplasm. Its subcellular location is the cytoskeleton. It localises to the microtubule organizing center. The protein resides in the centrosome. The protein localises to the cytoplasmic vesicle membrane. It is found in the nucleus. Its subcellular location is the cell membrane. It localises to the mitochondrion. The protein resides in the cell junction. The protein localises to the endoplasmic reticulum membrane. The catalysed reaction is chloride(in) = chloride(out). It catalyses the reaction thiocyanate(in) = thiocyanate(out). It carries out the reaction nitrate(in) = nitrate(out). The enzyme catalyses iodide(out) = iodide(in). The catalysed reaction is bromide(in) = bromide(out). It catalyses the reaction fluoride(in) = fluoride(out). It carries out the reaction choline(out) = choline(in). Its activity is regulated as follows. Channel activity is redox- and pH-regulated. Anion vs cation selectivity is enhanced when fully oxidized. Functionally, in the soluble state, catalyzes glutaredoxin-like thiol disulfide exchange reactions with reduced glutathione as electron donor. Can insert into membranes and form voltage-dependent multi-ion conductive channels. Membrane insertion seems to be redox-regulated and may occur only under oxidizing conditions. Has alternate cellular functions like a potential role in angiogenesis or in maintaining apical-basolateral membrane polarity during mitosis and cytokinesis. Could also promote endothelial cell proliferation and regulate endothelial morphogenesis (tubulogenesis). Promotes cell-surface expression of HRH3. This chain is Chloride intracellular channel protein 4 (Clic4), found in Rattus norvegicus (Rat).